We begin with the raw amino-acid sequence, 476 residues long: UDP-N-acetylmuramate--L-alanine ligase (476 aa).

125–131 (GTHGKTT) is a binding site for ATP.

The protein belongs to the MurCDEF family.

It is found in the cytoplasm. The catalysed reaction is UDP-N-acetyl-alpha-D-muramate + L-alanine + ATP = UDP-N-acetyl-alpha-D-muramoyl-L-alanine + ADP + phosphate + H(+). It participates in cell wall biogenesis; peptidoglycan biosynthesis. Cell wall formation. The chain is UDP-N-acetylmuramate--L-alanine ligase from Actinobacillus succinogenes (strain ATCC 55618 / DSM 22257 / CCUG 43843 / 130Z).